The chain runs to 657 residues: Hemocyanin A chain (657 aa).

A disulfide bond links C93 and C98. The N-linked (GlcNAc...) asparagine glycan is linked to N167. Cu cation is bound by residues H194, H198, H224, H344, H348, and H384. 2 disulfide bridges follow: C483-C502 and C562-C609. Residues 594–616 (EGHNGGHDYGGTHAQCGVHGEAY) are disordered.

It belongs to the tyrosinase family. Hemocyanin subfamily. Hexamer of a number of different chains, of which A, B, and C have been identified. Hemolymph.

It is found in the secreted. Its subcellular location is the extracellular space. Hemocyanins are copper-containing oxygen carriers occurring freely dissolved in the hemolymph of many mollusks and arthropods. The chain is Hemocyanin A chain from Panulirus interruptus (California spiny lobster).